We begin with the raw amino-acid sequence, 499 residues long: Dual specificity protein kinase CLK2 (499 aa).

The interval 1–67 is disordered; it reads MPHPRRYHSS…SYDDRSSDRR (67 aa). A compositionally biased stretch (basic and acidic residues) spans 8–21; the sequence is HSSERGSRGSYREH. Over residues 22 to 33 the composition is skewed to basic residues; sequence YRSRKHKRRRSR. Serine 34 carries the phosphoserine; by PKB/AKT1 modification. A compositionally biased stretch (basic and acidic residues) spans 47–67; the sequence is REDSYHVRSRSSYDDRSSDRR. Serine 98 carries the post-translational modification Phosphoserine. Position 99 is a phosphotyrosine; by autocatalysis (tyrosine 99). The segment at 101 to 143 is disordered; it reads YQRENSSYRSQRSSRRKHRRRRRRSRTFSRSSSQHSSRRAKSV. Positions 112-127 are enriched in basic residues; sequence RSSRRKHRRRRRRSRT. At threonine 127 the chain carries Phosphothreonine; by PKB/AKT1. The residue at position 142 (serine 142) is a Phosphoserine; by autocatalysis. Position 153 is a phosphotyrosine (tyrosine 153). One can recognise a Protein kinase domain in the interval 163 to 479; it reads YEIVSTLGEG…LGEALQHPFF (317 aa). ATP is bound by residues 169–177 and lysine 193; that span reads LGEGTFGRV. Aspartate 290 (proton acceptor) is an active-site residue. Residue threonine 344 is modified to Phosphothreonine; by PKB/AKT2.

It belongs to the protein kinase superfamily. CMGC Ser/Thr protein kinase family. Lammer subfamily. In terms of assembly, interacts with RBMX. Interacts with AKT1 and UBL5. Autophosphorylates on all three types of residues. Phosphorylation on Ser-34 and Thr-127 by AKT1 is induced by ionizing radiation or insulin. Phosphorylation plays a critical role in cell proliferation following low dose radiation and prevents cell death following high dose radiation. Phosphorylation at Thr-344 by PKB/AKT2 induces its kinase activity which is required for its stability. The phosphorylation status at Ser-142 influences its subnuclear localization; inhibition of phosphorylation at Ser-142 results in accumulation in the nuclear speckle. As to expression, endothelial cells. Expressed in androgen-dependent prostate cancer cells.

The protein localises to the nucleus. It localises to the nucleus speckle. It catalyses the reaction L-seryl-[protein] + ATP = O-phospho-L-seryl-[protein] + ADP + H(+). The catalysed reaction is L-threonyl-[protein] + ATP = O-phospho-L-threonyl-[protein] + ADP + H(+). The enzyme catalyses L-tyrosyl-[protein] + ATP = O-phospho-L-tyrosyl-[protein] + ADP + H(+). Its activity is regulated as follows. 5,6-dichloro-1-b-D-ribofuranosylbenzimidazole (DRB) inhibits autophosphorylation. TG003 inhibits its kinase activity and affects the regulation of alternative splicing mediated by phosphorylation of SR proteins. Functionally, dual specificity kinase acting on both serine/threonine and tyrosine-containing substrates. Phosphorylates serine- and arginine-rich (SR) proteins of the spliceosomal complex. May be a constituent of a network of regulatory mechanisms that enable SR proteins to control RNA splicing and can cause redistribution of SR proteins from speckles to a diffuse nucleoplasmic distribution. Acts as a suppressor of hepatic gluconeogenesis and glucose output by repressing PPARGC1A transcriptional activity on gluconeogenic genes via its phosphorylation. Phosphorylates PPP2R5B thereby stimulating the assembly of PP2A phosphatase with the PPP2R5B-AKT1 complex leading to dephosphorylation of AKT1. Phosphorylates: PTPN1, SRSF1 and SRSF3. Regulates the alternative splicing of tissue factor (F3) pre-mRNA in endothelial cells. Phosphorylates PAGE4 at several serine and threonine residues and this phosphorylation attenuates the ability of PAGE4 to potentiate the transcriptional activator activity of JUN. The sequence is that of Dual specificity protein kinase CLK2 (CLK2) from Homo sapiens (Human).